Consider the following 638-residue polypeptide: MAEHRSMDGRMEAATRGGSHLQAAAQTPPRPGPPSAPPPPPKEGHQEGLVELPASFRELLTFFCTNATIHGAIRLVCSRGNRLKTTSWGLLSLGALVALCWQLGLLFERHWHRPVLMAVSVHSERKLLPLVTLCDGNPRRPSPVLRHLELLDEFARENIDSLYNVNLSQGRAALSAPVPRHEPPFHLDREIRLQRLSHSGSRVRVGFRLCNSTGGDCFYRGYTSGVAAVQDWCHFHYVDILALLPAAWEDSHGSQDGHFVLSCSYDGLDCQARQFRTFHHPTYGSCYTVDGVWTAQRPGITHGVGLVLRVEQQPHLPLLSTLAGIRVMVHGRNHTPFLGHHSFSVRPGTEATISIREDEVHRLGSPYGHCTAGAEGVEVELLHNTSYTRQACLVSCFQQLMVETCSCGYYLHPLPAGAEYCSSARHPAWGHCFYRLYQDLETHRLPCTSRCPRPCRESAFKLSTGTSRWPSAKSAGWTLATLGEQGLPRQSHRQRSSLAKINIVYQELNYRSVEEAPVYSVPQLLSAMGSLCSLWFGASVLSLLELLELLLDASALTLVLGGRRLRRAWFSWPRASPASGASSIKPEASQMPTPAGGTSDDPEPSGPHLPRVMLPGVLAGVSAEESWAGPQPLETLDT.

Over residues 1-13 the composition is skewed to basic and acidic residues; sequence MAEHRSMDGRMEA. Positions 1 to 47 are disordered; that stretch reads MAEHRSMDGRMEAATRGGSHLQAAAQTPPRPGPPSAPPPPPKEGHQE. The Cytoplasmic portion of the chain corresponds to 1–86; it reads MAEHRSMDGR…CSRGNRLKTT (86 aa). Residues 28 to 41 show a composition bias toward pro residues; sequence PPRPGPPSAPPPPP. Residues 87–107 traverse the membrane as a helical segment; sequence SWGLLSLGALVALCWQLGLLF. The Extracellular segment spans residues 108–530; the sequence is ERHWHRPVLM…VPQLLSAMGS (423 aa). 2 N-linked (GlcNAc...) asparagine glycosylation sites follow: N166 and N384. A helical membrane pass occupies residues 531–551; it reads LCSLWFGASVLSLLELLELLL. The Cytoplasmic segment spans residues 552-638; the sequence is DASALTLVLG…GPQPLETLDT (87 aa). Residues 574 to 613 form a disordered region; it reads RASPASGASSIKPEASQMPTPAGGTSDDPEPSGPHLPRVM.

This sequence belongs to the amiloride-sensitive sodium channel (TC 1.A.6) family. SCNN1D subfamily. Can form an alternative heterotrimeric epithelial sodium channel (ENaC), composed of a delta (SCNN1D), beta (SCNN1B), and gamma (SCNN1G) subunit, where the delta (SCNN1D) subunit replaces the alpha (SCNN1A) subunit.

It localises to the apical cell membrane. The enzyme catalyses Na(+)(in) = Na(+)(out). With respect to regulation, originally identified and characterized by its inhibition by the diuretic drug amiloride. Its function is as follows. Potential alternative pore-forming subunit of the epithelial sodium channel (ENaC), capable of replacing the alpha/SCNN1A subunit, creating a more active channel with distinct properties. ENaC functions in epithelial tissues, where it facilitates the electrodiffusion of sodium ions from the extracellular fluid through the apical membrane of cells, with water following osmotically, regulating sodium balance and fluid homeostasis. This subunit could also function independently as a sodium channel or assemble into other tissue-specific heterotrimeric sodium channels. The chain is Epithelial sodium channel subunit delta from Pan troglodytes (Chimpanzee).